Here is a 1407-residue protein sequence, read N- to C-terminus: DNA-directed RNA polymerase subunit beta' (1407 aa).

C70, C72, C85, and C88 together coordinate Zn(2+). Mg(2+) is bound by residues D460, D462, and D464. Positions 814, 888, 895, and 898 each coordinate Zn(2+).

The protein belongs to the RNA polymerase beta' chain family. As to quaternary structure, the RNAP catalytic core consists of 2 alpha, 1 beta, 1 beta' and 1 omega subunit. When a sigma factor is associated with the core the holoenzyme is formed, which can initiate transcription. It depends on Mg(2+) as a cofactor. Zn(2+) serves as cofactor.

The enzyme catalyses RNA(n) + a ribonucleoside 5'-triphosphate = RNA(n+1) + diphosphate. DNA-dependent RNA polymerase catalyzes the transcription of DNA into RNA using the four ribonucleoside triphosphates as substrates. The polypeptide is DNA-directed RNA polymerase subunit beta' (Salmonella arizonae (strain ATCC BAA-731 / CDC346-86 / RSK2980)).